The chain runs to 278 residues: Replication protein A 32 kDa subunit B (278 aa).

Residues 70 to 143 (VVIVGRISRM…RSVNVFSVRP (74 aa)) constitute a DNA-binding region (OB).

The protein belongs to the replication factor A protein 2 family. Heterotrimer of RPA1, RPA2 and RPA3 (canonical replication protein A complex). Phosphorylated in a cell-cycle-dependent manner (from the S phase until mitosis). In response to DNA damage, recruited to DNA-repair nuclear foci, as a hypophosphorylated form.

Its subcellular location is the nucleus. Its function is as follows. Component of the replication protein A complex (RPA) required for DNA recombination, repair and replication. The activity of RPA is mediated by single-stranded DNA binding and protein interactions. Required fo cell division in meristems. Involved in the maintenance of transcriptional epigenetic gene silencing (TGS) at specific loci (including some transposons) by regulating histone H3 acetylation, 'Lys-4' and 'Lys-9' methylation. This Arabidopsis thaliana (Mouse-ear cress) protein is Replication protein A 32 kDa subunit B (RPA2B).